The primary structure comprises 365 residues: F-box protein At1g48060 (365 aa).

Residues 1–20 form a disordered region; sequence MKPQEEEEKNENMARKRSKS. Residues 20–69 enclose the F-box domain; sequence SSSSLSIPLDIATDIFLRLPAKSVVRFSCVAKHWSSITTAPYFTNSFETR.

The sequence is that of F-box protein At1g48060 from Arabidopsis thaliana (Mouse-ear cress).